The primary structure comprises 146 residues: Cyanate hydratase (146 aa).

Active-site residues include R87, E90, and S113.

It belongs to the cyanase family.

The catalysed reaction is cyanate + hydrogencarbonate + 3 H(+) = NH4(+) + 2 CO2. Catalyzes the reaction of cyanate with bicarbonate to produce ammonia and carbon dioxide. This is Cyanate hydratase from Teredinibacter turnerae (strain ATCC 39867 / T7901).